Consider the following 119-residue polypeptide: Large ribosomal subunit protein bL20 (119 aa).

It belongs to the bacterial ribosomal protein bL20 family.

Functionally, binds directly to 23S ribosomal RNA and is necessary for the in vitro assembly process of the 50S ribosomal subunit. It is not involved in the protein synthesizing functions of that subunit. The chain is Large ribosomal subunit protein bL20 from Dechloromonas aromatica (strain RCB).